The primary structure comprises 232 residues: Enolase-phosphatase E1 (232 aa).

It belongs to the HAD-like hydrolase superfamily. MasA/MtnC family. In terms of assembly, monomer. It depends on Mg(2+) as a cofactor.

The enzyme catalyses 5-methylsulfanyl-2,3-dioxopentyl phosphate + H2O = 1,2-dihydroxy-5-(methylsulfanyl)pent-1-en-3-one + phosphate. It functions in the pathway amino-acid biosynthesis; L-methionine biosynthesis via salvage pathway; L-methionine from S-methyl-5-thio-alpha-D-ribose 1-phosphate: step 3/6. The protein operates within amino-acid biosynthesis; L-methionine biosynthesis via salvage pathway; L-methionine from S-methyl-5-thio-alpha-D-ribose 1-phosphate: step 4/6. In terms of biological role, bifunctional enzyme that catalyzes the enolization of 2,3-diketo-5-methylthiopentyl-1-phosphate (DK-MTP-1-P) into the intermediate 2-hydroxy-3-keto-5-methylthiopentenyl-1-phosphate (HK-MTPenyl-1-P), which is then dephosphorylated to form the acireductone 1,2-dihydroxy-3-keto-5-methylthiopentene (DHK-MTPene). This is Enolase-phosphatase E1 from Xylella fastidiosa (strain M12).